A 99-amino-acid polypeptide reads, in one-letter code: Large ribosomal subunit protein uL23 (99 aa).

It belongs to the universal ribosomal protein uL23 family. As to quaternary structure, part of the 50S ribosomal subunit. Contacts protein L29, and trigger factor when it is bound to the ribosome.

Its function is as follows. One of the early assembly proteins it binds 23S rRNA. One of the proteins that surrounds the polypeptide exit tunnel on the outside of the ribosome. Forms the main docking site for trigger factor binding to the ribosome. This is Large ribosomal subunit protein uL23 from Psychromonas ingrahamii (strain DSM 17664 / CCUG 51855 / 37).